The primary structure comprises 230 residues: UPF0502 protein Oter_3715 (230 aa).

It belongs to the UPF0502 family.

This Opitutus terrae (strain DSM 11246 / JCM 15787 / PB90-1) protein is UPF0502 protein Oter_3715.